A 605-amino-acid polypeptide reads, in one-letter code: MSQLSSTLKRYTESARYTDAHYAKSGYGAYTPSSYGANLAASLLEKEKLGFKPVPTSSFLTRPRTYGPSSLLDYDRGRPLLRPDITGGGKRAESQTRGTERPLGSGLSGGSGFPYGVTNNCLSYLPINAYDQGVTLTQKLDSQSDLARDFSSLRTSDSYRIDPRNLGRSPMLARTRKELCTLQGLYQTASCPEYLVDYLENYGRKGSASQVPSQAPPSRVPEIISPTYRPIGRYTLWETGKGQAPGPSRSSSPGRDGMNSKSAQGLAGLRNLGNTCFMNSILQCLSNTRELRDYCLQRLYMRDLHHGSNAHTALVEEFAKLIQTIWTSSPNDVVSPSEFKTQIQRYAPRFVGYNQQDAQEFLRFLLDGLHNEVNRVTLRPKSNPENLDHLPDDEKGRQMWRKYLEREDSRIGDLFVGQLKSSLTCTDCGYCSTVFDPFWDLSLPIAKRGYPEVTLMDCMRLFTKEDVLDGDEKPTCCRCRGRKRCIKKFSIQRFPKILVLHLKRFSESRIRTSKLTTFVNFPLRDLDLREFASENTNHAVYNLYAVSNHSGTTMGGHYTAYCRSPGTGEWHTFNDSSVTPMSSSQVRTSDAYLLFYELASPPSRM.

The necessary for interaction with MDM4 stretch occupies residues 1 to 200; it reads MSQLSSTLKR…CPEYLVDYLE (200 aa). 2 disordered regions span residues 71–107 and 237–264; these read LLDYDRGRPLLRPDITGGGKRAESQTRGTERPLGSGL and WETGKGQAPGPSRSSSPGRDGMNSKSAQ. Residues 90-100 are compositionally biased toward basic and acidic residues; sequence KRAESQTRGTE. Residues 245–255 are compositionally biased toward low complexity; it reads PGPSRSSSPGR. In terms of domain architecture, USP spans 267-599; it reads AGLRNLGNTC…DAYLLFYELA (333 aa). The active-site Nucleophile is Cys-276. The interval 403-503 is necessary for interaction with MDM4; the sequence is YLEREDSRIG…FPKILVLHLK (101 aa). Zn(2+) contacts are provided by Cys-425, Cys-428, Cys-476, and Cys-479. His-557 functions as the Proton acceptor in the catalytic mechanism.

This sequence belongs to the peptidase C19 family. USP2 subfamily. Homooligomer. Found in trimeric complex with MDM2 and MDM4 and USP2. Interacts with CCND1; the interaction is direct and promotes its stabilization by antagonizing ubiquitin-dependent degradation. Interacts (via N-terminus and C-terminus) with MDM2. Interacts with MDM4. Interacts with PER1. Interacts with KCNQ1; counteracts the NEDD4L-specific down-regulation of I(Ks) and restore plasma membrane localization of KCNQ1. Isoform 4: Interacts with NHERF4 and CLTC. In terms of tissue distribution, expressed in mesangial cells of the kidney and in different types of glomerulonephritides (at protein level).

The protein localises to the cytoplasm. It is found in the perinuclear region. It localises to the nucleus. The protein resides in the membrane. It carries out the reaction Thiol-dependent hydrolysis of ester, thioester, amide, peptide and isopeptide bonds formed by the C-terminal Gly of ubiquitin (a 76-residue protein attached to proteins as an intracellular targeting signal).. With respect to regulation, cleavage is inhibited by ubiquitin in a dosage-dependent manner. Cleavage is blocked by ubiquitin aldehyde. In terms of biological role, hydrolase that deubiquitinates polyubiquitinated target proteins such as MDM2, MDM4 and CCND1. Isoform 1 and isoform 4 possess both ubiquitin-specific peptidase and isopeptidase activities. Deubiquitinates MDM2 without reversing MDM2-mediated p53/TP53 ubiquitination and thus indirectly promotes p53/TP53 degradation and limits p53 activity. Has no deubiquitinase activity against p53/TP53. Prevents MDM2-mediated degradation of MDM4. Plays a role in the G1/S cell-cycle progression in normal and cancer cells. Regulates the circadian clock by modulating its intrinsic circadian rhythm and its capacity to respond to external cues. Associates with clock proteins and deubiquitinates core clock component PER1 but does not affect its overall stability. Regulates the nucleocytoplasmic shuttling and nuclear retention of PER1 and its repressive role on the clock transcription factors CLOCK and BMAL1. Plays a role in the regulation of myogenic differentiation of embryonic muscle cells. Circadian clock output effector that regulates Ca(2+) absorption in the small intestine. Probably functions by regulating protein levels of the membrane scaffold protein NHERF4 in a rhythmic manner, and is therefore likely to control Ca(2+) membrane permeability mediated by the Ca(2+) channel TRPV6 in the intestine. This is Ubiquitin carboxyl-terminal hydrolase 2 (USP2) from Homo sapiens (Human).